Reading from the N-terminus, the 498-residue chain is Probable cytosol aminopeptidase (498 aa).

Positions 269 and 274 each coordinate Mn(2+). Lysine 281 is a catalytic residue. Residues aspartate 292, aspartate 351, and glutamate 353 each contribute to the Mn(2+) site. Arginine 355 is a catalytic residue.

It belongs to the peptidase M17 family. Requires Mn(2+) as cofactor.

The protein resides in the cytoplasm. It carries out the reaction Release of an N-terminal amino acid, Xaa-|-Yaa-, in which Xaa is preferably Leu, but may be other amino acids including Pro although not Arg or Lys, and Yaa may be Pro. Amino acid amides and methyl esters are also readily hydrolyzed, but rates on arylamides are exceedingly low.. The enzyme catalyses Release of an N-terminal amino acid, preferentially leucine, but not glutamic or aspartic acids.. Presumably involved in the processing and regular turnover of intracellular proteins. Catalyzes the removal of unsubstituted N-terminal amino acids from various peptides. The sequence is that of Probable cytosol aminopeptidase from Glaesserella parasuis serovar 5 (strain SH0165) (Haemophilus parasuis).